Consider the following 299-residue polypeptide: GTPase Era (299 aa).

One can recognise an Era-type G domain in the interval 2-170 (KTGFVALAGK…LDLIIENLPE (169 aa)). Residues 10-17 (GKPNVGKS) form a G1 region. 10 to 17 (GKPNVGKS) provides a ligand contact to GTP. Residues 36 to 40 (QTTRN) form a G2 region. Positions 57 to 60 (DTPG) are G3. GTP contacts are provided by residues 57 to 61 (DTPGI) and 119 to 122 (NKID). The interval 119–122 (NKID) is G4. The G5 stretch occupies residues 149–151 (TSA). Positions 201–278 (TYEEIPHSVA…FLDLHVKVKR (78 aa)) constitute a KH type-2 domain.

Belongs to the TRAFAC class TrmE-Era-EngA-EngB-Septin-like GTPase superfamily. Era GTPase family. As to quaternary structure, monomer.

It is found in the cytoplasm. Its subcellular location is the cell inner membrane. Functionally, an essential GTPase that binds both GDP and GTP, with rapid nucleotide exchange. Plays a role in 16S rRNA processing and 30S ribosomal subunit biogenesis and possibly also in cell cycle regulation and energy metabolism. The polypeptide is GTPase Era (Thermosipho melanesiensis (strain DSM 12029 / CIP 104789 / BI429)).